The chain runs to 1237 residues: U3 small nucleolar RNA-associated protein 22 (1237 aa).

The tract at residues 1–78 (MATSVKRKAS…TNTAATRHNG (78 aa)) is disordered. Ser-10 and Ser-58 each carry phosphoserine. Phosphothreonine is present on Thr-60. The segment covering 61–78 (SPESNEVATNTAATRHNG) has biased composition (polar residues). Ser-64 is modified (phosphoserine).

The protein belongs to the NRAP family. As to quaternary structure, interacts with snoRNA U3. Interacts with MPP10. Component of the ribosomal small subunit (SSU) processome composed of at least 40 protein subunits and snoRNA U3. Interacts with UBP10.

The protein localises to the nucleus. It is found in the nucleolus. Involved in nucleolar processing of pre-18S ribosomal RNA and ribosome assembly. This Saccharomyces cerevisiae (strain ATCC 204508 / S288c) (Baker's yeast) protein is U3 small nucleolar RNA-associated protein 22 (UTP22).